The chain runs to 1388 residues: Rho-associated protein kinase 2 (1388 aa).

The interval 1-27 (MSRPPPTGKMPGAPETAPGDGAGASRQ) is disordered. The 263-residue stretch at 92–354 (YDVVKVIGRG…VEEIRQHPFF (263 aa)) folds into the Protein kinase domain. Residues 98-106 (IGRGAFGEV) and K121 contribute to the ATP site. D214 acts as the Proton acceptor in catalysis. Positions 357–425 (DQWHWDNIRE…YRENLLLSDS (69 aa)) constitute an AGC-kinase C-terminal domain. An interaction with PPP1R12A region spans residues 363-784 (NIRETAAPVV…INELLKQKDV (422 aa)). The tract at residues 373 to 420 (PELSSDIDSSNFDDIEDDKGDVETFPIPKAFVGNQLPFIGFTYYRENL) is interaction with NPM1. Phosphothreonine; by ROCK2 is present on T414. Coiled coils occupy residues 429–1024 (RETD…EKQL) and 1053–1131 (DTDV…IGLD). An REM-1 domain is found at 497 to 573 (ALRQLEREKA…LDETNALLRT (77 aa)). A Phosphotyrosine; by SRC modification is found at Y722. Positions 979–1047 (TSDVANLANE…LAEIMNRKEP (69 aa)) constitute a RhoBD domain. Residues 979 to 1047 (TSDVANLANE…LAEIMNRKEP (69 aa)) are RHOA binding. S1137 carries the post-translational modification Phosphoserine. The region spanning 1150 to 1349 (ESRLEGWLSL…WVSRLVKKIP (200 aa)) is the PH domain. T1212 carries the phosphothreonine modification. A Phorbol-ester/DAG-type zinc finger spans residues 1260–1315 (GHEFIPTLYHFPTNCEACMKPLWHMFKPPPALECRRCHIKCHKDHMDKKEEIIAPC). Residues 1345 to 1388 (VKKIPKKPPAPDPFARSSPRTSMKIQQNQSIRRPSRQLAPNKPS) are disordered. Phosphoserine occurs at positions 1362 and 1374. Over residues 1362–1376 (SPRTSMKIQQNQSIR) the composition is skewed to polar residues.

It belongs to the protein kinase superfamily. AGC Ser/Thr protein kinase family. Homodimer. Interacts with IRS1. Interacts with RAF1. Interacts with RHOA (activated by GTP), RHOB and RHOC. Interacts with PPP1R12A. Interacts with EP300. Interacts with CHORDC1. Interacts with BRCA2. Interacts with NPM1; this interaction enhances ROCK2 activity. Interacts with SORL1. Interacts with PJVK. Mg(2+) is required as a cofactor. In terms of processing, phosphorylation at Tyr-722 reduces its binding to RHOA and is crucial for focal adhesion dynamics. Dephosphorylation by PTPN11 stimulates its RHOA binding activity. Post-translationally, cleaved by granzyme B during apoptosis. This leads to constitutive activation of the kinase and membrane blebbing. As to expression, expressed in the brain (at protein level).

It is found in the cytoplasm. Its subcellular location is the cell membrane. The protein localises to the nucleus. The protein resides in the cytoskeleton. It localises to the microtubule organizing center. It is found in the centrosome. It catalyses the reaction L-seryl-[protein] + ATP = O-phospho-L-seryl-[protein] + ADP + H(+). The enzyme catalyses L-threonyl-[protein] + ATP = O-phospho-L-threonyl-[protein] + ADP + H(+). Its activity is regulated as follows. Activated by RHOA binding. Inhibited by Y-27632. In terms of biological role, protein kinase which is a key regulator of actin cytoskeleton and cell polarity. Involved in regulation of smooth muscle contraction, actin cytoskeleton organization, stress fiber and focal adhesion formation, neurite retraction, cell adhesion and motility via phosphorylation of ADD1, BRCA2, CNN1, EZR, DPYSL2, EP300, MSN, MYL9/MLC2, NPM1, RDX, PPP1R12A and VIM. Phosphorylates SORL1 and IRF4. Acts as a negative regulator of VEGF-induced angiogenic endothelial cell activation. Positively regulates the activation of p42/MAPK1-p44/MAPK3 and of p90RSK/RPS6KA1 during myogenic differentiation. Plays an important role in the timely initiation of centrosome duplication. Inhibits keratinocyte terminal differentiation. May regulate closure of the eyelids and ventral body wall through organization of actomyosin bundles. Plays a critical role in the regulation of spine and synaptic properties in the hippocampus. Plays an important role in generating the circadian rhythm of the aortic myofilament Ca(2+) sensitivity and vascular contractility by modulating the myosin light chain phosphorylation. In Homo sapiens (Human), this protein is Rho-associated protein kinase 2 (ROCK2).